Reading from the N-terminus, the 452-residue chain is Probable ECA polymerase (452 aa).

The next 11 membrane-spanning stretches (helical) occupy residues 6–26 (FSGLLVVWLLSTLFIATLTWF), 37–57 (VFFSLLFLLTFFFGFPLTSVL), 63–83 (VGVAPPEILLQALLSAACFYG), 118–138 (VILMGIALVSVAIFFMHNGFL), 155–175 (GVALKRFFYFFIPAMLVVYFL), 181–201 (AWLFFLVSTVAFGLLTYMIVG), 207–227 (IIIAFAIFLFIGIIRGWISLW), 228–248 (MLAAAGVLGIVGMFWLALKRY), 341–361 (LVVMGGALFIPLGAIVVGLII), 378–398 (YKAAILHSFCFGAIFNMIVLA), and 410–430 (VFFLVVFGASLLVAKLLFWLF).

Belongs to the WzyE family. In terms of assembly, probably part of a complex composed of WzxE, WzyE and WzzE.

Its subcellular location is the cell inner membrane. Its pathway is bacterial outer membrane biogenesis; enterobacterial common antigen biosynthesis. Its function is as follows. Probably involved in the polymerization of enterobacterial common antigen (ECA) trisaccharide repeat units. This Salmonella typhi protein is Probable ECA polymerase.